A 293-amino-acid polypeptide reads, in one-letter code: MDKSTWTTKVGLAQMLKGGVIMDVVTPEQARIAEEAGAVAVMALERVPADIRAQGGVARMSDPELILAIKEAVTIPVMAKARIGHFVEAQVLEALGIDYIDESEVLTPADEEHHINKHKFRIPFVCGCRNLGEGLRRVAEGAAMLRTKGEAGTGNVVEAVRHARAVYSEIRRLQTMDEDELFTYAKNIQAPYELVRQVAESGRLPVVNFAAGGIATPADAALLMQLGVDGVFVGSGIFKSGDPARRARAIVAATTHYNEPEIIAEVSRGLGEAMVGIEIGKIPRDQLMAGRGW.

Position 23 (Asp23) interacts with D-ribose 5-phosphate. Lys80 acts as the Schiff-base intermediate with D-ribose 5-phosphate in catalysis. Gly152 serves as a coordination point for D-ribose 5-phosphate. Arg164 contributes to the D-glyceraldehyde 3-phosphate binding site. D-ribose 5-phosphate is bound by residues Gly213 and Gly234–Ser235.

It belongs to the PdxS/SNZ family. In terms of assembly, in the presence of PdxT, forms a dodecamer of heterodimers.

It catalyses the reaction aldehydo-D-ribose 5-phosphate + D-glyceraldehyde 3-phosphate + L-glutamine = pyridoxal 5'-phosphate + L-glutamate + phosphate + 3 H2O + H(+). It functions in the pathway cofactor biosynthesis; pyridoxal 5'-phosphate biosynthesis. Catalyzes the formation of pyridoxal 5'-phosphate from ribose 5-phosphate (RBP), glyceraldehyde 3-phosphate (G3P) and ammonia. The ammonia is provided by the PdxT subunit. Can also use ribulose 5-phosphate and dihydroxyacetone phosphate as substrates, resulting from enzyme-catalyzed isomerization of RBP and G3P, respectively. This Roseiflexus castenholzii (strain DSM 13941 / HLO8) protein is Pyridoxal 5'-phosphate synthase subunit PdxS.